A 249-amino-acid chain; its full sequence is DNA polymerase sliding clamp 1 (249 aa).

This sequence belongs to the PCNA family. In terms of assembly, forms heterodimers with PCNA2, which then recruit PCNA3; does not form homotrimers. The heterodimers interact with RfcS homotetramers. Heterotrimer which circularizes head-to-tail (head is at N-terminus, tail is at C-terminus) to form a toroid; DNA passes through its center. Replication factor C (RFC) is required to load the toroid on the DNA. Heterotrimer interacts, probably via this subunit, with flap endonuclease 1 (fen), Hjc, Dpo4, and XPF.

Its function is as follows. One of the sliding clamp subunits that acts as a moving platform for DNA processing. Responsible for tethering the catalytic subunit of DNA polymerase to DNA during high-speed replication. Heterotrimer stimulates the Holliday junction resolvase Hjc. DNA polymerase I, DNA ligase and the flap endonuclease may be constitutively associated with the PCNA heterotrimer forming a scanning complex able to couple DNA synthesis and Okazaki fragment maturation. In Saccharolobus solfataricus (strain ATCC 35092 / DSM 1617 / JCM 11322 / P2) (Sulfolobus solfataricus), this protein is DNA polymerase sliding clamp 1.